A 414-amino-acid polypeptide reads, in one-letter code: N-carbamoyl-L-amino-acid amidohydrolase (414 aa).

Positions 83, 94, 129, and 195 each coordinate a divalent metal cation. An N-carbamoyl-L-alpha-amino acid contacts are provided by Q198, H231, N281, R294, and G363. Positions 214–333 (GIAGPSWFKV…QIEKNMAAVP (120 aa)) are involved in dimerization. H388 is an a divalent metal cation binding site.

The protein belongs to the peptidase M20 family. As to quaternary structure, homodimer. Mn(2+) is required as a cofactor. Requires Ni(2+) as cofactor. The cofactor is Co(2+). It depends on Fe(2+) as a cofactor.

It carries out the reaction an N-carbamoyl-L-alpha-amino acid + H2O + 2 H(+) = an L-alpha-amino acid + NH4(+) + CO2. The enzyme catalyses N-carbamoyl-L-methionine + H2O + 2 H(+) = L-methionine + NH4(+) + CO2. Catalyzes the hydrolysis of N-carbamoyl-L-alpha-amino acids to free L-alpha-amino acids. Is strictly L-specific since it is inactive toward N-carbamoyl-D-alpha-amino acids. In Pseudomonas sp. (strain NS671), this protein is N-carbamoyl-L-amino-acid amidohydrolase.